The chain runs to 430 residues: Asparagine--tRNA ligase (430 aa).

It belongs to the class-II aminoacyl-tRNA synthetase family. As to quaternary structure, homodimer.

It localises to the cytoplasm. The catalysed reaction is tRNA(Asn) + L-asparagine + ATP = L-asparaginyl-tRNA(Asn) + AMP + diphosphate + H(+). This Bacillus velezensis (strain DSM 23117 / BGSC 10A6 / LMG 26770 / FZB42) (Bacillus amyloliquefaciens subsp. plantarum) protein is Asparagine--tRNA ligase.